The chain runs to 190 residues: Putative glutathione-dependent formaldehyde-activating enzyme (190 aa).

A CENP-V/GFA domain is found at 19–165 (FKGGKLYCHC…FRKEGLQTYD (147 aa)). Zn(2+) is bound by residues C26, C28, C47, C49, C52, C94, and C97.

The protein belongs to the Gfa family. It depends on Zn(2+) as a cofactor.

It catalyses the reaction S-(hydroxymethyl)glutathione = glutathione + formaldehyde. Its pathway is one-carbon metabolism; formaldehyde degradation; formate from formaldehyde (glutathione route): step 1/3. Catalyzes the condensation of formaldehyde and glutathione to S-hydroxymethylglutathione. The polypeptide is Putative glutathione-dependent formaldehyde-activating enzyme (Phaeosphaeria nodorum (strain SN15 / ATCC MYA-4574 / FGSC 10173) (Glume blotch fungus)).